The chain runs to 206 residues: Guanylyl cyclase inhibitory protein (206 aa).

G2 carries the N-myristoyl glycine lipid modification. EF-hand domains follow at residues S31 to G49, N51 to G86, T87 to M122, and T135 to V170. 8 residues coordinate Ca(2+): D64, N66, D68, E75, D100, D102, D104, and E111.

Retina; inner segments, somata and synaptic terminals of cone receptors.

Does not stimulate guanylyl cyclase (GC) when free calcium ion concentration is low, but inhibits GC when free calcium ions concentration is elevated. The protein is Guanylyl cyclase inhibitory protein (GCIP) of Lithobates pipiens (Northern leopard frog).